Here is a 113-residue protein sequence, read N- to C-terminus: Insulin (113 aa).

An N-terminal signal peptide occupies residues 1-24 (MAALWLQAFSLLVLMMVSWPGSQA). Disulfide bonds link Cys-32/Cys-99, Cys-44/Cys-112, and Cys-98/Cys-103. Residues 56 to 90 (DVDPLLGFLPPKAGGAVVQGGENEVTFKDQMEMMV) constitute a propeptide, c peptide.

The protein belongs to the insulin family. As to quaternary structure, heterodimer of a B chain and an A chain linked by two disulfide bonds.

It localises to the secreted. Functionally, insulin decreases blood glucose concentration. It increases cell permeability to monosaccharides, amino acids and fatty acids. It accelerates glycolysis, the pentose phosphate cycle, and glycogen synthesis in liver. The sequence is that of Insulin (ins) from Oreochromis niloticus (Nile tilapia).